Consider the following 100-residue polypeptide: Putative pterin-4-alpha-carbinolamine dehydratase (100 aa).

It belongs to the pterin-4-alpha-carbinolamine dehydratase family.

It catalyses the reaction (4aS,6R)-4a-hydroxy-L-erythro-5,6,7,8-tetrahydrobiopterin = (6R)-L-erythro-6,7-dihydrobiopterin + H2O. The polypeptide is Putative pterin-4-alpha-carbinolamine dehydratase (Bradyrhizobium diazoefficiens (strain JCM 10833 / BCRC 13528 / IAM 13628 / NBRC 14792 / USDA 110)).